We begin with the raw amino-acid sequence, 162 residues long: Large ribosomal subunit protein bL17 (162 aa).

A compositionally biased stretch (basic and acidic residues) spans 125–140 (AAKEAPAKEVAEEKAA). Residues 125-162 (AAKEAPAKEVAEEKAAKPAKKAAPKKAEKEEAEDAAEA) form a disordered region.

This sequence belongs to the bacterial ribosomal protein bL17 family. As to quaternary structure, part of the 50S ribosomal subunit. Contacts protein L32.

This chain is Large ribosomal subunit protein bL17, found in Oleidesulfovibrio alaskensis (strain ATCC BAA-1058 / DSM 17464 / G20) (Desulfovibrio alaskensis).